We begin with the raw amino-acid sequence, 524 residues long: Ribonuclease Y (524 aa).

A helical membrane pass occupies residues 3–23; it reads IVINLLLLVLAALVAFVAGFF. Positions 214-280 constitute a KH domain; sequence ALSVVHIQSD…KLTLKKLLAD (67 aa). The HD domain maps to 340-432; the sequence is LLQHSREVAM…VDAANTISLS (93 aa).

This sequence belongs to the RNase Y family.

It localises to the cell membrane. Its function is as follows. Endoribonuclease that initiates mRNA decay. This Chlorobium chlorochromatii (strain CaD3) protein is Ribonuclease Y.